A 170-amino-acid chain; its full sequence is Cathelicidin antimicrobial peptide (170 aa).

Positions 1-30 (MKTQRDSPSLGRWSLVLLLLGLVMPLAIVA) are cleaved as a signal peptide. The propeptide at 31–131 (QVLSYQEAVL…DISCDKDNRR (101 aa)) is cathelin-like domain (CLD). Intrachain disulfides connect Cys86-Cys97 and Cys108-Cys125. An active core region spans residues 150–162 (FKRIVQRIKDFLQ).

It belongs to the cathelicidin family. As to quaternary structure, monomer, homodimer or homotrimer (in vitro). Oligomerizes as tetra- or hexamer in solution (in vitro). Proteolytically cleaved by proteinase PRTN3 into antibacterial peptide LL-37. Proteolytically cleaved by cathepsin CTSG and neutrophil elastase ELANE. In terms of processing, resistant to proteolytic degradation in solution, and when bound to both zwitterionic (mimicking mammalian membranes) and negatively charged membranes (mimicking bacterial membranes). Post-translationally, after secretion onto the skin surface, the CAMP gene product is processed by a serine protease-dependent mechanism into multiple novel antimicrobial peptides distinct from and shorter than cathelicidin LL-37. These peptides show enhanced antimicrobial action, acquiring the ability to kill skin pathogens such as S.aureus, E.coli and C.albicans. These peptides have lost the ability to stimulate CXCL8/IL8 release from keratinocytes. The peptides act synergistically, killing bacteria at lower concentrations when present together, and maintain activity at increased salt condition.

It is found in the secreted. It localises to the vesicle. Functionally, antimicrobial protein that is an integral component of the innate immune system. Binds to bacterial lipopolysaccharides (LPS). Acts via neutrophil N-formyl peptide receptors to enhance the release of CXCL2. Postsecretory processing generates multiple cathelicidin antimicrobial peptides with various lengths which act as a topical antimicrobial defense in sweat on skin. The unprocessed precursor form, cathelicidin antimicrobial peptide, inhibits the growth of Gram-negative E.coli and E.aerogenes with efficiencies comparable to that of the mature peptide LL-37 (in vitro). Antimicrobial peptide that is an integral component of the innate immune system. Binds to bacterial lipopolysaccharides (LPS). Causes membrane permeabilization by forming transmembrane pores (in vitro). Causes lysis of E.coli. Exhibits antimicrobial activity against Gram-negative bacteria such as P.aeruginosa, S.typhimurium, E.aerogenes, E.coli and P.syringae, Gram-positive bacteria such as L.monocytogenes, S.epidermidis, S.pyogenes and S.aureus, as well as vancomycin-resistant enterococci (in vitro). Exhibits antimicrobial activity against methicillin-resistant S.aureus, P.mirabilis, and C.albicans in low-salt media, but not in media containing 100 mM NaCl (in vitro). Forms chiral supramolecular assemblies with quinolone signal (PQS) molecules of P.aeruginosa, which may lead to interference of bacterial quorum signaling and perturbance of bacterial biofilm formation. May form supramolecular fiber-like assemblies on bacterial membranes. Induces cytokine and chemokine producation as well as TNF/TNFA and CSF2/GMCSF production in normal human keratinocytes. Exhibits hemolytic activity against red blood cells. Its function is as follows. Exhibits antimicrobial activity against E.coli and B.megaterium (in vitro). This chain is Cathelicidin antimicrobial peptide, found in Nomascus gabriellae (Red-cheeked gibbon).